The sequence spans 293 residues: ATP synthase gamma chain (293 aa).

The protein belongs to the ATPase gamma chain family. F-type ATPases have 2 components, CF(1) - the catalytic core - and CF(0) - the membrane proton channel. CF(1) has five subunits: alpha(3), beta(3), gamma(1), delta(1), epsilon(1). CF(0) has three main subunits: a, b and c.

The protein resides in the cell inner membrane. Functionally, produces ATP from ADP in the presence of a proton gradient across the membrane. The gamma chain is believed to be important in regulating ATPase activity and the flow of protons through the CF(0) complex. The chain is ATP synthase gamma chain from Psychrobacter sp. (strain PRwf-1).